Consider the following 239-residue polypeptide: Increased recombination centers protein 22-1 (239 aa).

Positions 1-19 (MKLSTIFTAFAATIATVAG) are cleaved as a signal peptide. At 20–161 (YETTGSKQTV…AAVSFFDPRL (142 aa)) the chain is on the lumenal side. A helical transmembrane segment spans residues 162-182 (IFLELVLLITFAGLIYVGYEI). The Cytoplasmic segment spans residues 183-239 (WGKQYFKGVASVKAKKVSAAKASSPVASGPSTTSATGYDTNWIPESHLKQKKTKKVN). The span at 201–213 (AAKASSPVASGPS) shows a compositional bias: low complexity. The interval 201–222 (AAKASSPVASGPSTTSATGYDT) is disordered.

Belongs to the IRC22 family.

Its subcellular location is the endoplasmic reticulum membrane. Is probably involved in a pathway contributing to genomic integrity. The sequence is that of Increased recombination centers protein 22-1 (IRC22-1) from Candida albicans (strain WO-1) (Yeast).